Here is a 69-residue protein sequence, read N- to C-terminus: uncharacterized protein (69 aa).

The first 19 residues, methionine 1 to alanine 19, serve as a signal peptide directing secretion.

This is an uncharacterized protein from Pasteurella multocida (strain Pm70).